The primary structure comprises 852 residues: DNA mismatch repair protein MutS (852 aa).

An ATP-binding site is contributed by 615 to 622 (GPNMAGKS).

Belongs to the DNA mismatch repair MutS family.

Its function is as follows. This protein is involved in the repair of mismatches in DNA. It is possible that it carries out the mismatch recognition step. This protein has a weak ATPase activity. In Thermodesulfovibrio yellowstonii (strain ATCC 51303 / DSM 11347 / YP87), this protein is DNA mismatch repair protein MutS.